We begin with the raw amino-acid sequence, 276 residues long: Undecaprenyl-diphosphatase (276 aa).

A run of 8 helical transmembrane segments spans residues 2-22 (LEIL…FLPI), 43-63 (FIDM…VVLY), 83-103 (WTLW…GLPL), 111-131 (LMNW…FIVI), 147-167 (TLPY…LIPG), 186-206 (YVAA…ASLL), 224-244 (LILA…IRFL), and 255-275 (AFGW…ALLA).

This sequence belongs to the UppP family.

Its subcellular location is the cell membrane. The enzyme catalyses di-trans,octa-cis-undecaprenyl diphosphate + H2O = di-trans,octa-cis-undecaprenyl phosphate + phosphate + H(+). Catalyzes the dephosphorylation of undecaprenyl diphosphate (UPP). Confers resistance to bacitracin. The chain is Undecaprenyl-diphosphatase from Limosilactobacillus fermentum (strain NBRC 3956 / LMG 18251) (Lactobacillus fermentum).